A 155-amino-acid polypeptide reads, in one-letter code: MLPFKLWVDADALPRILREVILRASDRYQLEVTFVANQNVGITPSVRIKSIQVMSGADRADQEIVDRMQANDIVITQDIPLAAQVIEKGGIAIHPRGEVYTTANVKARLHLRDFMDTLRGAGVQTGGPPPISERDKREFSSALDQTILKQKRKTA.

The segment at 120–155 (GAGVQTGGPPPISERDKREFSSALDQTILKQKRKTA) is disordered.

The protein belongs to the UPF0178 family.

The chain is UPF0178 protein ACIAD2644 from Acinetobacter baylyi (strain ATCC 33305 / BD413 / ADP1).